A 105-amino-acid chain; its full sequence is Cuticle protein AMP1A (105 aa).

The disordered stretch occupies residues D1–Y21. Positions D16 to P81 constitute a Chitin-binding type R&amp;R domain.

In terms of tissue distribution, arthrodial membrane.

This Homarus americanus (American lobster) protein is Cuticle protein AMP1A.